Reading from the N-terminus, the 303-residue chain is Probable 5-dehydro-4-deoxyglucarate dehydratase (303 aa).

Belongs to the DapA family.

It carries out the reaction 5-dehydro-4-deoxy-D-glucarate + H(+) = 2,5-dioxopentanoate + CO2 + H2O. It participates in carbohydrate acid metabolism; D-glucarate degradation; 2,5-dioxopentanoate from D-glucarate: step 2/2. This is Probable 5-dehydro-4-deoxyglucarate dehydratase from Acinetobacter baumannii (strain AB307-0294).